Here is a 268-residue protein sequence, read N- to C-terminus: Undecaprenyl-diphosphatase (268 aa).

7 consecutive transmembrane segments (helical) span residues 43–63 (FWNTFTVLIQLGAILAIVVIY), 83–103 (FVIGVLAAFLPAVVVGLIAGK), 109–129 (LFNPWVVCFSLIVGGAVLMWV), 144–164 (FPLPMYIWIGIAQCLAMIPGV), 184–204 (AAEFSFFLAIPTMIGAFAYDF), 218–238 (IVAIGFVVSFVTAIVVVKAFL), and 246–266 (FTFFAWWRVIVGTLGLIALAL).

Belongs to the UppP family.

The protein resides in the cell inner membrane. It carries out the reaction di-trans,octa-cis-undecaprenyl diphosphate + H2O = di-trans,octa-cis-undecaprenyl phosphate + phosphate + H(+). Its function is as follows. Catalyzes the dephosphorylation of undecaprenyl diphosphate (UPP). Confers resistance to bacitracin. The polypeptide is Undecaprenyl-diphosphatase (Nitrobacter hamburgensis (strain DSM 10229 / NCIMB 13809 / X14)).